The following is a 139-amino-acid chain: Nucleoside diphosphate kinase (139 aa).

Lys11, Phe59, Arg87, Thr93, Arg104, and Asn114 together coordinate ATP. The active-site Pros-phosphohistidine intermediate is His117.

This sequence belongs to the NDK family. Homotetramer. Mg(2+) serves as cofactor.

The protein localises to the cytoplasm. The catalysed reaction is a 2'-deoxyribonucleoside 5'-diphosphate + ATP = a 2'-deoxyribonucleoside 5'-triphosphate + ADP. It catalyses the reaction a ribonucleoside 5'-diphosphate + ATP = a ribonucleoside 5'-triphosphate + ADP. Its function is as follows. Major role in the synthesis of nucleoside triphosphates other than ATP. The ATP gamma phosphate is transferred to the NDP beta phosphate via a ping-pong mechanism, using a phosphorylated active-site intermediate. The chain is Nucleoside diphosphate kinase from Wolbachia sp. subsp. Brugia malayi (strain TRS).